We begin with the raw amino-acid sequence, 379 residues long: S-adenosylmethionine:tRNA ribosyltransferase-isomerase (379 aa).

Residues 35 to 58 (AESRPHAESVPHAESRPHAESAFS) form a disordered region.

Belongs to the QueA family. As to quaternary structure, monomer.

The protein localises to the cytoplasm. It carries out the reaction 7-aminomethyl-7-carbaguanosine(34) in tRNA + S-adenosyl-L-methionine = epoxyqueuosine(34) in tRNA + adenine + L-methionine + 2 H(+). It functions in the pathway tRNA modification; tRNA-queuosine biosynthesis. Transfers and isomerizes the ribose moiety from AdoMet to the 7-aminomethyl group of 7-deazaguanine (preQ1-tRNA) to give epoxyqueuosine (oQ-tRNA). This is S-adenosylmethionine:tRNA ribosyltransferase-isomerase from Rhizobium leguminosarum bv. trifolii (strain WSM2304).